A 458-amino-acid polypeptide reads, in one-letter code: Cysteine--tRNA ligase (458 aa).

A Zn(2+)-binding site is contributed by Cys27. The 'HIGH' region motif lies at 29–39 (ITPQSEPHIGH). Zn(2+) contacts are provided by Cys207, His232, and Glu236. The 'KMSKS' region signature appears at 265–269 (KMSKS). Lys268 serves as a coordination point for ATP.

Belongs to the class-I aminoacyl-tRNA synthetase family. In terms of assembly, monomer. Zn(2+) is required as a cofactor.

The protein resides in the cytoplasm. The enzyme catalyses tRNA(Cys) + L-cysteine + ATP = L-cysteinyl-tRNA(Cys) + AMP + diphosphate. The protein is Cysteine--tRNA ligase of Dehalococcoides mccartyi (strain ATCC BAA-2266 / KCTC 15142 / 195) (Dehalococcoides ethenogenes (strain 195)).